A 350-amino-acid polypeptide reads, in one-letter code: MTQAPDREKALELAMAQIEKSYGKGSVMRLGDEMRQPISVIPTGSIALDVALGIGGLPRGRVVEIYGPESSGKTTVALHAVANAQAAGGVAAFIDAEHALDPEYAKKLGVDTDSLLVSQPDTGEQALEIADMLIRSGALDILVIDSVAALVPRAELEGEMGDSHVGLQARLMSQALRKMTGALNNSGTTAIFINQLREKIGVMFGSPETTTGGKALKFYASVRMDVRRIETLKDGTNAVGNRTRVKIVKNKVSPPFKQAEFDILYGRGISREGSLIDMGVDQGFIRKSGSWFTYEGEQLGQGKENARTFLMENDEVANEIEKKIKEKLGIGAVVTDDLSDDGVLPAPVDF.

67 to 74 (GPESSGKT) contacts ATP.

Belongs to the RecA family.

It is found in the cytoplasm. Can catalyze the hydrolysis of ATP in the presence of single-stranded DNA, the ATP-dependent uptake of single-stranded DNA by duplex DNA, and the ATP-dependent hybridization of homologous single-stranded DNAs. It interacts with LexA causing its activation and leading to its autocatalytic cleavage. The sequence is that of Protein RecA from Mycobacterium avium (strain 104).